The following is a 321-amino-acid chain: Small ribosomal subunit biogenesis GTPase RsgA (321 aa).

The 160-residue stretch at Gln-89–Pro-248 folds into the CP-type G domain. Residues Thr-138–Asp-141 and Gly-190–Ser-198 each bind GTP. Zn(2+)-binding residues include Cys-273, Cys-278, His-280, and Cys-286.

This sequence belongs to the TRAFAC class YlqF/YawG GTPase family. RsgA subfamily. In terms of assembly, monomer. Associates with 30S ribosomal subunit, binds 16S rRNA. Zn(2+) serves as cofactor.

The protein resides in the cytoplasm. Its function is as follows. One of several proteins that assist in the late maturation steps of the functional core of the 30S ribosomal subunit. Helps release RbfA from mature subunits. May play a role in the assembly of ribosomal proteins into the subunit. Circularly permuted GTPase that catalyzes slow GTP hydrolysis, GTPase activity is stimulated by the 30S ribosomal subunit. This Prochlorococcus marinus (strain MIT 9313) protein is Small ribosomal subunit biogenesis GTPase RsgA.